A 115-amino-acid chain; its full sequence is Large ribosomal subunit protein bL20 (115 aa).

Belongs to the bacterial ribosomal protein bL20 family.

Its function is as follows. Binds directly to 23S ribosomal RNA and is necessary for the in vitro assembly process of the 50S ribosomal subunit. It is not involved in the protein synthesizing functions of that subunit. The chain is Large ribosomal subunit protein bL20 from Chlorobaculum tepidum (strain ATCC 49652 / DSM 12025 / NBRC 103806 / TLS) (Chlorobium tepidum).